The primary structure comprises 317 residues: MELEFLGTGAGSPSKSRNVSAVALKLLDEIKKIWLFDVGEGTQHQILNTTIRPRKIDKIFITHMHGDHIFGLPGFLSSRSFQGGEKMGPLTIYGPKGISDFVNISLKVSQTKLSYELNFVELEEEGLLLENDRFKVYAYKLDHRIECWGYRIEEKDYPGELQVEKLREAKAPSGPIYGRLKAGEVVTLEDGRTIDGKDFIGKAKKGRIVTILGDTRQTPNLKLLAKDADVLVHESTFGKGEGKLARNYHHSTCVQAATLAKEVGVKQLLLTHISARYVGKMVKVLEKEAKKVFPNTKVVKDFDTFNIPFPERKDDEQ.

Residues histidine 63, histidine 65, aspartate 67, histidine 68, histidine 143, aspartate 214, and histidine 272 each contribute to the Zn(2+) site. Aspartate 67 (proton acceptor) is an active-site residue.

The protein belongs to the RNase Z family. As to quaternary structure, homodimer. Zn(2+) is required as a cofactor.

It catalyses the reaction Endonucleolytic cleavage of RNA, removing extra 3' nucleotides from tRNA precursor, generating 3' termini of tRNAs. A 3'-hydroxy group is left at the tRNA terminus and a 5'-phosphoryl group is left at the trailer molecule.. Its function is as follows. Zinc phosphodiesterase, which displays some tRNA 3'-processing endonuclease activity. Probably involved in tRNA maturation, by removing a 3'-trailer from precursor tRNA. The polypeptide is Ribonuclease Z (Ligilactobacillus salivarius (strain UCC118) (Lactobacillus salivarius)).